The primary structure comprises 449 residues: Chromosomal replication initiator protein DnaA (449 aa).

The segment at 1–73 (MDADLKNLWD…ANSIKAVCSK (73 aa)) is domain I, interacts with DnaA modulators. Residues 73–110 (KLYTIEFIIMSEIYEKEEIKSSSNQKSKAIVVNDEMSS) are domain II. The interval 111-327 (TLNPKYTFNS…GALIRIIAYS (217 aa)) is domain III, AAA+ region. ATP is bound by residues Gly-155, Gly-157, Lys-158, and Thr-159. The segment at 328–449 (SLTNREVTVD…NDITKKLTQN (122 aa)) is domain IV, binds dsDNA.

The protein belongs to the DnaA family. In terms of assembly, oligomerizes as a right-handed, spiral filament on DNA at oriC.

The protein resides in the cytoplasm. Plays an essential role in the initiation and regulation of chromosomal replication. ATP-DnaA binds to the origin of replication (oriC) to initiate formation of the DNA replication initiation complex once per cell cycle. Binds the DnaA box (a 9 base pair repeat at the origin) and separates the double-stranded (ds)DNA. Forms a right-handed helical filament on oriC DNA; dsDNA binds to the exterior of the filament while single-stranded (ss)DNA is stabiized in the filament's interior. The ATP-DnaA-oriC complex binds and stabilizes one strand of the AT-rich DNA unwinding element (DUE), permitting loading of DNA polymerase. After initiation quickly degrades to an ADP-DnaA complex that is not apt for DNA replication. Binds acidic phospholipids. The protein is Chromosomal replication initiator protein DnaA of Clostridium beijerinckii (strain ATCC 51743 / NCIMB 8052) (Clostridium acetobutylicum).